The sequence spans 542 residues: CTP synthase (542 aa).

The segment at 1-265 is amidoligase domain; it reads MTRFIFITGG…DVQVCRHFHL (265 aa). CTP is bound at residue serine 13. Serine 13 lines the UTP pocket. ATP contacts are provided by residues 14–19 and aspartate 71; that span reads SLGKGL. The Mg(2+) site is built by aspartate 71 and glutamate 139. CTP contacts are provided by residues 146–148, 186–191, and lysine 222; these read DIE and KTKPTQ. UTP-binding positions include 186 to 191 and lysine 222; that span reads KTKPTQ. The Glutamine amidotransferase type-1 domain maps to 291–541; that stretch reads TIAVVGKYTS…VQAAITQSRL (251 aa). Glycine 353 is an L-glutamine binding site. Residue cysteine 380 is the Nucleophile; for glutamine hydrolysis of the active site. L-glutamine contacts are provided by residues 381 to 384, glutamate 404, and arginine 469; that span reads FGMQ. Residues histidine 514 and glutamate 516 contribute to the active site.

It belongs to the CTP synthase family. As to quaternary structure, homotetramer.

It carries out the reaction UTP + L-glutamine + ATP + H2O = CTP + L-glutamate + ADP + phosphate + 2 H(+). The catalysed reaction is L-glutamine + H2O = L-glutamate + NH4(+). It catalyses the reaction UTP + NH4(+) + ATP = CTP + ADP + phosphate + 2 H(+). It participates in pyrimidine metabolism; CTP biosynthesis via de novo pathway; CTP from UDP: step 2/2. Its activity is regulated as follows. Allosterically activated by GTP, when glutamine is the substrate; GTP has no effect on the reaction when ammonia is the substrate. The allosteric effector GTP functions by stabilizing the protein conformation that binds the tetrahedral intermediate(s) formed during glutamine hydrolysis. Inhibited by the product CTP, via allosteric rather than competitive inhibition. Its function is as follows. Catalyzes the ATP-dependent amination of UTP to CTP with either L-glutamine or ammonia as the source of nitrogen. Regulates intracellular CTP levels through interactions with the four ribonucleotide triphosphates. This chain is CTP synthase, found in Rhodospirillum rubrum (strain ATCC 11170 / ATH 1.1.1 / DSM 467 / LMG 4362 / NCIMB 8255 / S1).